Here is a 259-residue protein sequence, read N- to C-terminus: Small ribosomal subunit protein uS2 (259 aa).

Belongs to the universal ribosomal protein uS2 family.

This Streptococcus pneumoniae serotype 4 (strain ATCC BAA-334 / TIGR4) protein is Small ribosomal subunit protein uS2.